The following is a 306-amino-acid chain: Serine/threonine-protein phosphatase PP2A-1 catalytic subunit (306 aa).

Positions 54, 56, 82, and 114 each coordinate Mn(2+). His115 (proton donor) is an active-site residue. Residues His164 and His238 each contribute to the Mn(2+) site.

Belongs to the PPP phosphatase family. PP-2A subfamily. Requires Mn(2+) as cofactor.

It localises to the cytoplasm. It catalyses the reaction O-phospho-L-seryl-[protein] + H2O = L-seryl-[protein] + phosphate. The catalysed reaction is O-phospho-L-threonyl-[protein] + H2O = L-threonyl-[protein] + phosphate. This Oryza sativa subsp. indica (Rice) protein is Serine/threonine-protein phosphatase PP2A-1 catalytic subunit (PP2A1).